A 370-amino-acid polypeptide reads, in one-letter code: Glucan endo-1,3-beta-glucosidase, basic vacuolar isoform GLB (370 aa).

Positions 1-32 are cleaved as a signal peptide; it reads MSTSDKHNTPQMAAITLLGLLLVASTIEIAGA. Glutamine 33 bears the Pyrrolidone carboxylic acid mark. The active-site Proton donor is glutamate 128. Residue glutamate 273 is the Nucleophile of the active site. Positions 349-370 are cleaved as a propeptide — removed in mature form; the sequence is VSGGVWDSSVETNATASLISEM. N-linked (GlcNAc...) asparagine glycosylation is present at asparagine 361.

It belongs to the glycosyl hydrolase 17 family. Is expressed primarily in epidermal cell of healthy plant, and following induction by ethylene, accumulates in mesophyll cells.

It localises to the vacuole. It carries out the reaction Hydrolysis of (1-&gt;3)-beta-D-glucosidic linkages in (1-&gt;3)-beta-D-glucans.. Its function is as follows. Implicated in the defense of plants against pathogens. The chain is Glucan endo-1,3-beta-glucosidase, basic vacuolar isoform GLB from Nicotiana tabacum (Common tobacco).